Reading from the N-terminus, the 247-residue chain is Transmembrane protein 33 (247 aa).

Ala-2 is subject to N-acetylalanine. Residues 2–31 (ADTTPNGPQGAGAVQFMMTNKLDTAMWLSR) lie on the Lumenal side of the membrane. A helical transmembrane segment spans residues 32–52 (LFTVYCSALFVLPLLGLHEAA). Topologically, residues 53 to 100 (SFYQRALLANALTSALRLHQRLPHFQLSRAFLAQALLEDSCHYLLYSL) are cytoplasmic. A helical membrane pass occupies residues 101-121 (IFVNSYPVTMSIFPVLLFSLL). Residues 122–155 (HAATYTKKVLDARGSNSLPLLRSVLDKLSANQQN) lie on the Lumenal side of the membrane. Residues 156–176 (ILKFIACNEIFLMPATVFMLF) form a helical membrane-spanning segment. At 177–247 (SGQGSLLQPF…FISRLAPTVP (71 aa)) the chain is on the cytoplasmic side.

It belongs to the PER33/POM33 family. As to quaternary structure, interacts with EIF2AK3. Interacts with ARL6IP1, isoform RTN1-A of RTN1, isoform RTN2-B of RTN2, isoform 3 of RTN3 and isoform 3 of RTN4. Interacts with RNF5. Interacts with RNF26. Interacts with PKD2. In terms of tissue distribution, prostate cancer and several cancer cell lines (at protein level). Widely expressed. Expressed at higher levels in endocrine-resistant breast cancer cells as compared to endocrine-sensitive breast cancer cells. Expressed at higher levels in early recurrence breast cancer tissues as compared to non-recurrent breast tumors.

It localises to the endoplasmic reticulum membrane. It is found in the melanosome. Its subcellular location is the nucleus envelope. Its function is as follows. Acts as a regulator of the tubular endoplasmic reticulum (ER) network by modulating intracellular calcium homeostasis. Mechanistically, stimulates PKD2 calcium-dependent activity. Suppresses the RTN3/4-induced formation of the ER tubules. Positively regulates PERK-mediated and IRE1-mediated unfolded protein response signaling. Plays an essential role in VEGF-mediated release of Ca(2+) from ER stores during angiogenesis. Also plays a role in the modulation of innate immune signaling through the cGAS-STING pathway by interacting with RNF26. Participates in lipid metabolism by acting as a downstream effector of the pyruvate kinase/PKM. Forms a complex with RNF5 to facilitate polyubiquitination and subsequent degradation of SCAP on the ER membrane. The protein is Transmembrane protein 33 (TMEM33) of Homo sapiens (Human).